A 493-amino-acid polypeptide reads, in one-letter code: Cardiolipin synthase 1 (493 aa).

Transmembrane regions (helical) follow at residues 13-33 (FTII…IIIF) and 45-65 (WAWL…YLFF). PLD phosphodiesterase domains are found at residues 228–255 (MNNR…GDEY) and 406–433 (ENGF…DFRS). Active-site residues include histidine 233, lysine 235, aspartate 240, histidine 411, lysine 413, and aspartate 418.

This sequence belongs to the phospholipase D family. Cardiolipin synthase subfamily.

It localises to the cell membrane. It carries out the reaction 2 a 1,2-diacyl-sn-glycero-3-phospho-(1'-sn-glycerol) = a cardiolipin + glycerol. Its function is as follows. Catalyzes the reversible phosphatidyl group transfer from one phosphatidylglycerol molecule to another to form cardiolipin (CL) (diphosphatidylglycerol) and glycerol. The polypeptide is Cardiolipin synthase 1 (cls1) (Staphylococcus aureus (strain COL)).